The following is a 637-amino-acid chain: PTS system mannitol-specific EIICBA component (637 aa).

At 1–23 (MSSDIKIKVQSFGRFLSNMVMPN) the chain is on the cytoplasmic side. A PTS EIIC type-2 domain is found at 12–341 (FGRFLSNMVM…ILLKTSKVKE (330 aa)). A helical transmembrane segment spans residues 24–45 (IGAFIAWGIITALFIPTGWLPN). The Periplasmic segment spans residues 46–49 (ETLA). Residues 50-70 (KLVGPMITYLLPLLIGYTGGK) traverse the membrane as a helical segment. At 71–133 (LVGGERGGVV…SGFEMLVNNF (63 aa)) the chain is on the cytoplasmic side. The helical transmembrane segment at 134–155 (SAGIIGMILAILAFLGIGPIVE) threads the bilayer. The Periplasmic segment spans residues 156–164 (ALSKMLAAG). Residues 165-185 (VNFMVVHDMLPLASIFVEPAK) form a helical membrane-spanning segment. The Cytoplasmic segment spans residues 186 to 272 (ILFLNNAINH…VLMNPRLILA (87 aa)). A helical membrane pass occupies residues 273–292 (VILGGMTGVFTLTILGGGLV). At 293–312 (SPASPGSILAVLAMTPKGAY) the chain is on the periplasmic side. The chain crosses the membrane as a helical span at residues 313 to 334 (FANIAGVCAAMAVSFVVSAILL). Residues 335–637 (KTSKVKEEDD…EVLELLAGRK (303 aa)) lie on the Cytoplasmic side of the membrane. In terms of domain architecture, PTS EIIB type-2 spans 378 to 473 (RKIIVACDAG…RLVAAQRHTA (96 aa)). Residue Cys-384 is the Phosphocysteine intermediate; for EIIB activity of the active site. Cys-384 is modified (phosphocysteine; by EIIA). One can recognise a PTS EIIA type-2 domain in the interval 494–636 (FKLGAENIFL…DEVLELLAGR (143 aa)). His-554 acts as the Tele-phosphohistidine intermediate; for EIIA activity in catalysis. His-554 carries the post-translational modification Phosphohistidine; by HPr.

Homodimer. Post-translationally, an intramolecular phosphotransfer takes places between His-554 and Cys-384.

It is found in the cell inner membrane. It catalyses the reaction D-mannitol(out) + N(pros)-phospho-L-histidyl-[protein] = D-mannitol 1-phosphate(in) + L-histidyl-[protein]. The phosphoenolpyruvate-dependent sugar phosphotransferase system (sugar PTS), a major carbohydrate active transport system, catalyzes the phosphorylation of incoming sugar substrates concomitantly with their translocation across the cell membrane. This system is involved in D-mannitol transport. Also able to use D-mannonic acid. In Escherichia coli (strain K12), this protein is PTS system mannitol-specific EIICBA component.